The chain runs to 548 residues: 4-methyl-5-nitrocatechol 5-monooxygenase (548 aa).

The protein belongs to the PheA/TfdB FAD monooxygenase family. Monomer. FAD is required as a cofactor.

It catalyses the reaction 4-methyl-5-nitrocatechol + NADPH + O2 = 2-hydroxy-5-methylquinone + nitrite + NADP(+) + H2O + H(+). The enzyme catalyses 4-methyl-5-nitrocatechol + NADH + O2 = 2-hydroxy-5-methylquinone + nitrite + NAD(+) + H2O + H(+). With respect to regulation, activated by magnesium or manganese ions. Inhibited by concentrations of 4-methyl-5-nitrocatechol (MNC) above 2 mM. In terms of biological role, involved in the degradation of 2,4-dinitrotoluene (2,4-DNT). Catalyzes the removal of the nitro group from 4-methyl-5-nitrocatechol (MNC) to yield 2-hydroxy-5-methylquinone. It can use both NADH and NADPH as electron donors, but prefers NADPH. Also able to use 4-nitrocatechol as substrate. In Burkholderia sp, this protein is 4-methyl-5-nitrocatechol 5-monooxygenase.